The chain runs to 475 residues: Ribulose bisphosphate carboxylase large chain (475 aa).

The propeptide occupies 1 to 2 (MS). An N-acetylproline modification is found at proline 3. At lysine 14 the chain carries N6,N6,N6-trimethyllysine. Substrate contacts are provided by asparagine 123 and threonine 173. Lysine 175 serves as the catalytic Proton acceptor. Position 177 (lysine 177) interacts with substrate. Lysine 201, aspartate 203, and glutamate 204 together coordinate Mg(2+). Lysine 201 bears the N6-carboxylysine mark. The active-site Proton acceptor is the histidine 294. Substrate is bound by residues arginine 295, histidine 327, and serine 379.

This sequence belongs to the RuBisCO large chain family. Type I subfamily. In terms of assembly, heterohexadecamer of 8 large chains and 8 small chains; disulfide-linked. The disulfide link is formed within the large subunit homodimers. The cofactor is Mg(2+). Post-translationally, the disulfide bond which can form in the large chain dimeric partners within the hexadecamer appears to be associated with oxidative stress and protein turnover.

The protein resides in the plastid. It is found in the chloroplast. It carries out the reaction 2 (2R)-3-phosphoglycerate + 2 H(+) = D-ribulose 1,5-bisphosphate + CO2 + H2O. It catalyses the reaction D-ribulose 1,5-bisphosphate + O2 = 2-phosphoglycolate + (2R)-3-phosphoglycerate + 2 H(+). Functionally, ruBisCO catalyzes two reactions: the carboxylation of D-ribulose 1,5-bisphosphate, the primary event in carbon dioxide fixation, as well as the oxidative fragmentation of the pentose substrate in the photorespiration process. Both reactions occur simultaneously and in competition at the same active site. In Plumbago auriculata (Cape leadwort), this protein is Ribulose bisphosphate carboxylase large chain.